The following is a 234-amino-acid chain: Bradykinin-releasing enzyme KR-E-1 (234 aa).

One can recognise a Peptidase S1 domain in the interval 1–225 (VIGGDECNIN…YSDWIQSIIA (225 aa)). Cystine bridges form between cysteine 7–cysteine 139, cysteine 26–cysteine 42, cysteine 74–cysteine 232, cysteine 118–cysteine 186, cysteine 150–cysteine 165, and cysteine 176–cysteine 201. N-linked (GlcNAc...) asparagine glycosylation occurs at asparagine 20. Residues histidine 41 and aspartate 86 each act as charge relay system in the active site. The Charge relay system role is filled by serine 180.

Belongs to the peptidase S1 family. Snake venom subfamily. In terms of assembly, monomer. Expressed by the venom gland.

It is found in the secreted. Bradykinin-releasing enzyme. Releases bradykinin from bovine HMW kininogen. Has anticoagulant activity. Increases permeability of capillaries by intradermal injection into rabbits. The polypeptide is Bradykinin-releasing enzyme KR-E-1 (Gloydius ussuriensis (Ussuri mamushi)).